A 390-amino-acid chain; its full sequence is MRTLLDLDPKGKRVLVRVDYNVPVQDGKVQDETRILESLPTLRHLLAGGASLVLLSHLGRPKGPDPRYSLAPVGEALRAHLPEARFAPFPPGSEEARREAEALRPGEVLLLENVRFEPGEEKNDPELSARYARLGEAFVLDAFGSAHRAHASVVGVARLLPAYAGFLMEKEVRALSRLLKDPERPYAVVLGGAKVSDKIGVIESLLPRIDRLLIGGAMAFTFLKALGGEVGKSLVEEDRLDLAKDLLGRAEALGVRVYLPEDVVAAERIEAGVETRVFPARAIPVPYMGLDIGPKTREAFARALEGARTVFWNGPMGVFEVPPFDEGTLAVGRAIAALEGAFTVVGGGDSVAAVNRLGLKDRFGHVSTGGGASLEFLEKGTLPGLEVLEG.

Substrate is bound by residues 19–21 (DYN), Arg34, 57–60 (HLGR), Arg115, and Arg148. Residues Lys198, Gly289, Glu320, and 347–350 (GGDS) each bind ATP.

Belongs to the phosphoglycerate kinase family. Monomer.

It localises to the cytoplasm. The enzyme catalyses (2R)-3-phosphoglycerate + ATP = (2R)-3-phospho-glyceroyl phosphate + ADP. The protein operates within carbohydrate degradation; glycolysis; pyruvate from D-glyceraldehyde 3-phosphate: step 2/5. This is Phosphoglycerate kinase from Thermus thermophilus (strain ATCC BAA-163 / DSM 7039 / HB27).